Here is a 703-residue protein sequence, read N- to C-terminus: ABC transporter G family member 11 (703 aa).

The 244-residue stretch at 50–293 folds into the ABC transporter domain; that stretch reads LTWQDLTVMV…FAQAGFPCPA (244 aa). 87–94 lines the ATP pocket; sequence GPSGSGKS. The region spanning 382 to 594 is the ABC transmembrane type-2 domain; it reads LQTYTLTKRS…ALQGQYQNDL (213 aa). N-linked (GlcNAc...) asparagine glycosylation occurs at asparagine 394. 6 consecutive transmembrane segments (helical) span residues 406–426, 436–456, 485–505, 513–533, 540–560, and 628–648; these read LLIYILVTVCIGTIYLNVGTS, CASFVFGFVTFMSIGGFPSFV, TPFLIMITFISGTICYFMVGL, LFFVLCLYASVTVVESLMMAI, FLMGIIIGAGIQGIFMLVSGF, and INLSVILSMIIIYRIIFFIMI. N-linked (GlcNAc...) asparagine glycosylation is found at asparagine 671 and asparagine 675. Position 688 is a phosphoserine (serine 688).

The protein belongs to the ABC transporter superfamily. ABCG family. Eye pigment precursor importer (TC 3.A.1.204) subfamily. In terms of assembly, homodimer. Forms heterodimers with ABCG9, ABCG12 and ABCG14 in epidermal cells. Expressed in seedlings, roots, stems, leaves, flowers, and siliques, mostly in epidermis, trichomes, vasculatures and developing tissues. Follows an uniparental maternal expression in the seed, thus being the product of a maternally expressed imprinted gene. Accumulates in the phloem. Transcripts seem to be transported from shoots to roots.

The protein localises to the cell membrane. In terms of biological role, required for the cuticle, root suberin and pollen coat development by controlling cutin and maybe wax transport to the extracellular matrix. Involved in developmental plasticity and stress responses. Together with ABCG9 and ABCG14, required for vascular development by regulating lipid/sterol homeostasis. May be a transporter of lignin precursors during tracheary element differentiation. The chain is ABC transporter G family member 11 from Arabidopsis thaliana (Mouse-ear cress).